The primary structure comprises 158 residues: Protein Smg homolog (158 aa).

It belongs to the Smg family.

In Shewanella sp. (strain MR-4), this protein is Protein Smg homolog.